A 164-amino-acid polypeptide reads, in one-letter code: Thiol peroxidase (164 aa).

One can recognise a Thioredoxin domain in the interval 18 to 164 (KKVGDSAPDF…YEAVLSHLNK (147 aa)). Cys60 (cysteine sulfenic acid (-SOH) intermediate) is an active-site residue. Cys60 and Cys94 are oxidised to a cystine.

The protein belongs to the peroxiredoxin family. Tpx subfamily. As to quaternary structure, homodimer.

It carries out the reaction a hydroperoxide + [thioredoxin]-dithiol = an alcohol + [thioredoxin]-disulfide + H2O. In terms of biological role, thiol-specific peroxidase that catalyzes the reduction of hydrogen peroxide and organic hydroperoxides to water and alcohols, respectively. Plays a role in cell protection against oxidative stress by detoxifying peroxides. The polypeptide is Thiol peroxidase (Oceanobacillus iheyensis (strain DSM 14371 / CIP 107618 / JCM 11309 / KCTC 3954 / HTE831)).